A 382-amino-acid chain; its full sequence is Mannitol-1-phosphate 5-dehydrogenase (382 aa).

NAD(+) is bound at residue 3-14 (ALHFGAGNIGRG).

This sequence belongs to the mannitol dehydrogenase family.

The enzyme catalyses D-mannitol 1-phosphate + NAD(+) = beta-D-fructose 6-phosphate + NADH + H(+). In Salmonella agona (strain SL483), this protein is Mannitol-1-phosphate 5-dehydrogenase.